A 213-amino-acid polypeptide reads, in one-letter code: mRNA-decapping protein OPG121 (213 aa).

2 residues coordinate N(7)-methyl-GTP: glutamate 16 and arginine 50. Residues 30–209 (KDTHVFAACI…EYLSYIYNIL (180 aa)) enclose the Nudix hydrolase domain. The Nudix box motif lies at 111–132 (GKLDKKESIKDCLRRELKEESD). 2 residues coordinate Mg(2+): glutamate 126 and glutamate 130. Aspartate 151 is a binding site for N(7)-methyl-GTP. Residue glutamate 183 participates in Mg(2+) binding.

Belongs to the Nudix hydrolase family. In terms of assembly, interacts with the late transcription elongation factor VLTF-4/OPG110. Interacts with the late transcription factors VLTF-1. Requires Mg(2+) as cofactor. Mn(2+) is required as a cofactor.

It catalyses the reaction a 5'-end (N(7)-methyl 5'-triphosphoguanosine)-guanosine in mRNA + H2O = a 5'-end phospho-guanosine in mRNA + N(7)-methyl-GDP + 2 H(+). Functionally, acts with RNA polymerase to initiate transcription from late gene promoters. In Cynomys gunnisoni (Gunnison's prairie dog), this protein is mRNA-decapping protein OPG121 (OPG121).